A 211-amino-acid polypeptide reads, in one-letter code: Dual specificity phosphatase 29 (211 aa).

Residues 47–192 form the Tyrosine-protein phosphatase domain; it reads HVNEVWPGIY…LRTLDIQLAI (146 aa). Position 136–143 (136–143) interacts with substrate; the sequence is HCAMGRSR. The active-site Phosphocysteine intermediate is cysteine 137.

The protein belongs to the protein-tyrosine phosphatase family. Non-receptor class dual specificity subfamily.

The protein resides in the cytoplasm. It localises to the nucleus. The enzyme catalyses O-phospho-L-tyrosyl-[protein] + H2O = L-tyrosyl-[protein] + phosphate. It catalyses the reaction O-phospho-L-seryl-[protein] + H2O = L-seryl-[protein] + phosphate. It carries out the reaction O-phospho-L-threonyl-[protein] + H2O = L-threonyl-[protein] + phosphate. Functionally, dual specificity phosphatase able to dephosphorylate phosphotyrosine, phosphoserine and phosphothreonine residues within the same substrate, with a preference for phosphotyrosine as a substrate. Involved in the modulation of AMPK and MAPK1/2 signaling pathways. This chain is Dual specificity phosphatase 29 (dusp29), found in Callorhinchus milii (Ghost shark).